The sequence spans 518 residues: Glutamate--cysteine ligase (518 aa).

This sequence belongs to the glutamate--cysteine ligase type 1 family. Type 1 subfamily.

The enzyme catalyses L-cysteine + L-glutamate + ATP = gamma-L-glutamyl-L-cysteine + ADP + phosphate + H(+). It functions in the pathway sulfur metabolism; glutathione biosynthesis; glutathione from L-cysteine and L-glutamate: step 1/2. The polypeptide is Glutamate--cysteine ligase (Shigella flexneri serotype 5b (strain 8401)).